Consider the following 302-residue polypeptide: L-aminoadipate-semialdehyde dehydrogenase-phosphopantetheinyl transferase (302 aa).

Residues Arg44, 83-88 (RTGKGK), and 105-108 (NVSH) contribute to the CoA site. Positions 126 and 178 each coordinate Mg(2+). 178 to 182 (ESFIK) is a binding site for CoA.

Belongs to the P-Pant transferase superfamily. AcpS family. In terms of assembly, monomer. Mg(2+) is required as a cofactor.

It localises to the cytoplasm. Its subcellular location is the cytosol. The enzyme catalyses apo-[ACP] + CoA = holo-[ACP] + adenosine 3',5'-bisphosphate + H(+). The catalysed reaction is apo-[ACP] + acetyl-CoA = acetyl-[ACP] + adenosine 3',5'-bisphosphate + H(+). Its function is as follows. Catalyzes the post-translational modification of target proteins by phosphopantetheine. Can transfer the 4'-phosphopantetheine moiety from coenzyme A, regardless of whether the CoA is presented in the free thiol form or as an acetyl thioester, to a serine residue of a broad range of acceptors. This chain is L-aminoadipate-semialdehyde dehydrogenase-phosphopantetheinyl transferase (aasdhppt), found in Xenopus laevis (African clawed frog).